We begin with the raw amino-acid sequence, 140 residues long: MFEKNLSLSSKVFWEFSDVVFQRTLLGQELNESTVVLDFTSFSLLQVFWSVQVGETPLLRQNNLLLTWELVSGSSQTFNDNILVAVLGSDREDNLTNVDTSGQTVWLTPSTSHTLLQSIRTGTRQHLVDSQDMERMDSDS.

This is an uncharacterized protein from Saccharomyces cerevisiae (strain ATCC 204508 / S288c) (Baker's yeast).